The sequence spans 129 residues: UPF0102 protein Mnod_0024 (129 aa).

It belongs to the UPF0102 family.

This is UPF0102 protein Mnod_0024 from Methylobacterium nodulans (strain LMG 21967 / CNCM I-2342 / ORS 2060).